We begin with the raw amino-acid sequence, 374 residues long: Mitochondrial inner membrane protein oxa1-1 (374 aa).

Residues 77 to 97 (TINVYAGAPWWVSIILTTLGV) form a helical membrane-spanning segment. Topologically, residues 98–159 (RLALTPVMIA…GIYLKHNVNP (62 aa)) are mitochondrial intermembrane. Residues 160-180 (FAIFILPLTQSAVFFSFFYAI) traverse the membrane as a helical segment. Over 181–242 (RKMSRLSVDG…TIGNSTNWRT (62 aa)) the chain is Mitochondrial matrix. Residues 243–263 (FFFLCCLLSPLLTAKLPAAIF) traverse the membrane as a helical segment. Topologically, residues 264 to 374 (MYWIPSSLFN…SKKNSKKQSN (111 aa)) are mitochondrial intermembrane.

This sequence belongs to the OXA1/ALB3/YidC family.

It localises to the mitochondrion inner membrane. Its function is as follows. Required for the insertion of integral membrane proteins into the mitochondrial inner membrane. Essential for the activity and assembly of cytochrome c oxidase. Not essential for viability, while oxa102 is essential. When both genes are deleted the cell is non-viable, suggesting that oxa101 act as a back-up for oxa102. The chain is Mitochondrial inner membrane protein oxa1-1 (oxa101) from Schizosaccharomyces pombe (strain 972 / ATCC 24843) (Fission yeast).